Reading from the N-terminus, the 248-residue chain is tRNA pseudouridine synthase A (248 aa).

The Nucleophile role is filled by Asp-53. Tyr-111 contacts substrate.

It belongs to the tRNA pseudouridine synthase TruA family. As to quaternary structure, homodimer.

The enzyme catalyses uridine(38/39/40) in tRNA = pseudouridine(38/39/40) in tRNA. Functionally, formation of pseudouridine at positions 38, 39 and 40 in the anticodon stem and loop of transfer RNAs. This is tRNA pseudouridine synthase A from Streptococcus thermophilus (strain ATCC BAA-491 / LMD-9).